The primary structure comprises 506 residues: SPbeta prophage-derived uncharacterized protein YonE (506 aa).

Residues 473 to 506 (YTFTGNEVGRPNEGNKNNDNTVKSATSNGNDNPI) form a disordered region. Positions 486–506 (GNKNNDNTVKSATSNGNDNPI) are enriched in polar residues.

This Bacillus subtilis (strain 168) protein is SPbeta prophage-derived uncharacterized protein YonE (yonE).